Here is an 860-residue protein sequence, read N- to C-terminus: Leucine-rich repeat and death domain-containing protein 1 (860 aa).

A disordered region spans residues Met-1 to Leu-103. Polar residues predominate over residues Lys-50 to Gly-72. A compositionally biased stretch (low complexity) spans Thr-90–Leu-103. LRR repeat units follow at residues Leu-139 to Ile-163, Lys-164 to Asp-186, Leu-187 to Leu-210, His-211 to Leu-233, Asn-235 to Leu-256, Gly-257 to Leu-279, Thr-281 to Leu-302, Pro-303 to Leu-325, Lys-326 to Leu-348, Lys-350 to Phe-371, Arg-372 to Cys-394, Met-396 to Leu-417, Asn-419 to Leu-440, Asn-441 to Cys-463, Lys-465 to Leu-486, Asp-487 to Lys-510, Leu-512 to Leu-532, Ile-533 to Met-555, Ser-557 to Leu-578, Glu-579 to Leu-601, Gly-603 to Leu-624, Leu-627 to Met-650, Thr-651 to Leu-673, Asn-675 to Leu-696, Asn-697 to Ile-719, and Ser-721 to Gly-742. In terms of domain architecture, Death spans Glu-764–Asn-852. The LRR 27 repeat unit spans residues Arg-856–Phe-860.

This Homo sapiens (Human) protein is Leucine-rich repeat and death domain-containing protein 1 (LRRD1).